The primary structure comprises 516 residues: High-affinity nitrate transporter 2.3 (516 aa).

Transmembrane regions (helical) follow at residues 52–72, 76–96, 112–132, 142–162, 172–192, 209–229, 265–285, 299–319, 335–354, 367–387, 395–415, and 425–445; these read WFSF…LPLI, LGLT…GAVF, LASA…SIIQ, FFTG…SSMF, GVAG…MPLV, IAFF…LAFG, WILA…DNVV, TAGL…PGGG, LWGL…VLGI, VLFS…VPFV, ISGM…YIFF, and GIKY…LIYF. Residues 489-516 are disordered; the sequence is SVREGGRSSANGGQPRHTVPVDASPAGV.

It belongs to the major facilitator superfamily. Nitrate/nitrite porter (TC 2.A.1.8) family. Heterotetramer composed of two NRT2.3 and two NAR2.1. Isoform 1 interacts with NAR2.1, but not isoform 2. Expressed in the stelar cells of both primary and lateral roots, particularly at the site of lateral root emergence, root-shoot junction zone, vascular tissues of adventitious root primordia, leaves, germ tips and seed scutellum.

The protein resides in the cell membrane. Its function is as follows. Involved in nitrate transport, but does not seem to be able to mediate transport by its own. Acts as a dual component transporter with NAR2.1. Imports nitrate with high affinity when expressed with NAR2.1 in a heterologous system (Xenopus oocytes). Plays a key role in long-distance nitrate transport from root to shoot particularly at low external nitrate supply. The protein is High-affinity nitrate transporter 2.3 (NRT2.3) of Oryza sativa subsp. japonica (Rice).